The primary structure comprises 663 residues: Probable methylenetetrahydrofolate reductase (NADPH) (663 aa).

Glu76 serves as the catalytic Proton donor/acceptor. Residues 76–81 (EFFPPR) and 107–108 (TW) contribute to the NAD(+) site. The residue at position 107 (Thr107) is a Phosphothreonine. FAD is bound by residues 107-108 (TW), His141, 171-173 (RGD), 187-188 (RA), Tyr210, 214-217 (HPQA), Asp223, and Lys230. Asp173 lines the substrate pocket. Substrate contacts are provided by Gln241, Tyr334, and Arg338. Ser408 is subject to Phosphoserine. Thr465 is subject to Phosphothreonine. S-adenosyl-L-methionine is bound by residues 477 to 480 (QPET), 497 to 501 (TVNSQ), Thr578, and Thr591.

It belongs to the methylenetetrahydrofolate reductase family. It depends on FAD as a cofactor.

The enzyme catalyses (6S)-5-methyl-5,6,7,8-tetrahydrofolate + NADP(+) = (6R)-5,10-methylene-5,6,7,8-tetrahydrofolate + NADPH + H(+). It functions in the pathway one-carbon metabolism; tetrahydrofolate interconversion. The sequence is that of Probable methylenetetrahydrofolate reductase (NADPH) from Caenorhabditis elegans.